The primary structure comprises 253 residues: Methionine-R-sulfoxide reductase B3, mitochondrial (253 aa).

The N-terminal stretch at 1–56 (MPPAAPSVARSREGGGIGQRRLVFPKSARRTLPCPIALCLGLCLAAAAATTTRASA) is a signal peptide. Lysine 102 carries the post-translational modification N6-acetyllysine. Residues 107 to 229 (QQELRKRLTP…NSASLSFTPA (123 aa)) form the MsrB domain. The Zn(2+) site is built by cysteine 146, cysteine 149, cysteine 195, and cysteine 198. Catalysis depends on cysteine 218, which acts as the Nucleophile. Residues 227 to 253 (TPADSSEAEGSGIKESGSPAAADRAEL) form a disordered region. Position 244 is a phosphoserine (serine 244). An Endoplasmic reticulum retention signal motif is present at residues 250-253 (RAEL).

This sequence belongs to the MsrB Met sulfoxide reductase family. Monomer. Zn(2+) is required as a cofactor. In terms of tissue distribution, widely expressed. Detected in the sensory epithelia of the organ of Corti and vestibular end organs as early as P2 up to adulthood (at protein level). In the organ of Corti, present in inner and outer hair cells and, to a lesser extent, in supporting cells (at protein level). In hair cells, distributed throughout the cell body. Barely detectable level in stereocilia. Also observed in spiral ganglion neurons, but not in the stria vascularis. In the vestibular end organs, found throughout the sensory epithelium, but more intense expression in hair cells than in supporting cells (at protein level). In vestibular hair cells, present within cell bodies and to a lesser extent in kinocilia. Barely detectable in stereocilia.

The protein localises to the endoplasmic reticulum. The catalysed reaction is L-methionyl-[protein] + [thioredoxin]-disulfide + H2O = L-methionyl-(R)-S-oxide-[protein] + [thioredoxin]-dithiol. The enzyme catalyses [thioredoxin]-disulfide + L-methionine + H2O = L-methionine (R)-S-oxide + [thioredoxin]-dithiol. Catalyzes the reduction of free and protein-bound methionine sulfoxide to methionine. The polypeptide is Methionine-R-sulfoxide reductase B3, mitochondrial (Msrb3) (Mus musculus (Mouse)).